An 88-amino-acid polypeptide reads, in one-letter code: Probable Fe(2+)-trafficking protein (88 aa).

This sequence belongs to the Fe(2+)-trafficking protein family.

Its function is as follows. Could be a mediator in iron transactions between iron acquisition and iron-requiring processes, such as synthesis and/or repair of Fe-S clusters in biosynthetic enzymes. The protein is Probable Fe(2+)-trafficking protein of Teredinibacter turnerae (strain ATCC 39867 / T7901).